The primary structure comprises 179 residues: ATP synthase subunit delta, chloroplastic (179 aa).

This sequence belongs to the ATPase delta chain family. F-type ATPases have 2 components, F(1) - the catalytic core - and F(0) - the membrane proton channel. F(1) has five subunits: alpha(3), beta(3), gamma(1), delta(1), epsilon(1). CF(0) has four main subunits: a(1), b(1), b'(1) and c(10-14). The alpha and beta chains form an alternating ring which encloses part of the gamma chain. F(1) is attached to F(0) by a central stalk formed by the gamma and epsilon chains, while a peripheral stalk is formed by the delta, b and b' chains.

Its subcellular location is the plastid. The protein resides in the chloroplast thylakoid membrane. Its function is as follows. F(1)F(0) ATP synthase produces ATP from ADP in the presence of a proton or sodium gradient. F-type ATPases consist of two structural domains, F(1) containing the extramembraneous catalytic core and F(0) containing the membrane proton channel, linked together by a central stalk and a peripheral stalk. During catalysis, ATP synthesis in the catalytic domain of F(1) is coupled via a rotary mechanism of the central stalk subunits to proton translocation. Functionally, this protein is part of the stalk that links CF(0) to CF(1). It either transmits conformational changes from CF(0) to CF(1) or is implicated in proton conduction. This chain is ATP synthase subunit delta, chloroplastic, found in Ochrosphaera neapolitana.